We begin with the raw amino-acid sequence, 237 residues long: Uridylate kinase (237 aa).

11–14 provides a ligand contact to ATP; that stretch reads KLSG. G53 serves as a coordination point for UMP. Residues G54 and R58 each coordinate ATP. UMP contacts are provided by residues D73 and 134 to 141; that span reads TGNPFFTT. The ATP site is built by T161, Y167, and D170.

Belongs to the UMP kinase family. In terms of assembly, homohexamer.

It is found in the cytoplasm. The enzyme catalyses UMP + ATP = UDP + ADP. The protein operates within pyrimidine metabolism; CTP biosynthesis via de novo pathway; UDP from UMP (UMPK route): step 1/1. With respect to regulation, inhibited by UTP. Catalyzes the reversible phosphorylation of UMP to UDP. The sequence is that of Uridylate kinase from Nitrosomonas europaea (strain ATCC 19718 / CIP 103999 / KCTC 2705 / NBRC 14298).